We begin with the raw amino-acid sequence, 273 residues long: 2,3,4,5-tetrahydropyridine-2,6-dicarboxylate N-succinyltransferase (273 aa).

Positions 105 and 142 each coordinate substrate.

Belongs to the transferase hexapeptide repeat family. Homotrimer.

It is found in the cytoplasm. The enzyme catalyses (S)-2,3,4,5-tetrahydrodipicolinate + succinyl-CoA + H2O = (S)-2-succinylamino-6-oxoheptanedioate + CoA. The protein operates within amino-acid biosynthesis; L-lysine biosynthesis via DAP pathway; LL-2,6-diaminopimelate from (S)-tetrahydrodipicolinate (succinylase route): step 1/3. This is 2,3,4,5-tetrahydropyridine-2,6-dicarboxylate N-succinyltransferase from Bordetella avium (strain 197N).